The primary structure comprises 225 residues: Octanoyltransferase (225 aa).

The 176-residue stretch at 44-219 (RETPDEIWLL…NFIAQLTHRI (176 aa)) folds into the BPL/LPL catalytic domain. Residues 83 to 90 (RGGQITYH), 150 to 152 (SLG), and 163 to 165 (GIA) each bind substrate. The active-site Acyl-thioester intermediate is the Cys-181.

It belongs to the LipB family.

It is found in the cytoplasm. The enzyme catalyses octanoyl-[ACP] + L-lysyl-[protein] = N(6)-octanoyl-L-lysyl-[protein] + holo-[ACP] + H(+). It participates in protein modification; protein lipoylation via endogenous pathway; protein N(6)-(lipoyl)lysine from octanoyl-[acyl-carrier-protein]: step 1/2. Its function is as follows. Catalyzes the transfer of endogenously produced octanoic acid from octanoyl-acyl-carrier-protein onto the lipoyl domains of lipoate-dependent enzymes. Lipoyl-ACP can also act as a substrate although octanoyl-ACP is likely to be the physiological substrate. The chain is Octanoyltransferase from Nitrosomonas eutropha (strain DSM 101675 / C91 / Nm57).